The chain runs to 798 residues: Phenylalanine--tRNA ligase beta subunit (798 aa).

A tRNA-binding domain is found at 39–148 (NPIFDGFLVG…EDIPIGKKIN (110 aa)). Positions 402–477 (SCSNKIKLYH…RIYNYNNIPL (76 aa)) constitute a B5 domain. Asp-455, Asp-461, and Asp-465 together coordinate Mg(2+). The 94-residue stretch at 704–797 (SKYPTSRRDI…LKKKFQVVLR (94 aa)) folds into the FDX-ACB domain.

This sequence belongs to the phenylalanyl-tRNA synthetase beta subunit family. Type 1 subfamily. As to quaternary structure, tetramer of two alpha and two beta subunits. Mg(2+) serves as cofactor.

It localises to the cytoplasm. It catalyses the reaction tRNA(Phe) + L-phenylalanine + ATP = L-phenylalanyl-tRNA(Phe) + AMP + diphosphate + H(+). The polypeptide is Phenylalanine--tRNA ligase beta subunit (pheT) (Buchnera aphidicola subsp. Schizaphis graminum (strain Sg)).